Reading from the N-terminus, the 353-residue chain is D-alanine--D-alanine ligase (353 aa).

Positions 141-349 (KAALAGAGLA…LEQLVHELLE (209 aa)) constitute an ATP-grasp domain. 176 to 231 (ESGLCYPCFIKPANLGSSVGISKARNREELIHGLRLAATLDPRLVVEQGVQARELE) is an ATP binding site. Positions 302, 316, and 318 each coordinate Mg(2+).

This sequence belongs to the D-alanine--D-alanine ligase family. Requires Mg(2+) as cofactor. It depends on Mn(2+) as a cofactor.

It localises to the cytoplasm. The catalysed reaction is 2 D-alanine + ATP = D-alanyl-D-alanine + ADP + phosphate + H(+). The protein operates within cell wall biogenesis; peptidoglycan biosynthesis. Functionally, cell wall formation. This is D-alanine--D-alanine ligase from Parasynechococcus marenigrum (strain WH8102).